We begin with the raw amino-acid sequence, 388 residues long: Probable Na(+)/H(+) antiporter 3 (388 aa).

12 helical membrane passes run 2–22 (ESYY…PNLL), 27–47 (IPAI…GLNI), 53–73 (TLKI…GLEV), 81–101 (EFKN…VGGY), 102–122 (LIGQ…VIFA), 146–166 (IILS…SVVI), 175–195 (VGTF…AIPS), 215–235 (VLFI…HPIV), 263–283 (AIGY…ETNI), 294–314 (LLLI…FIAL), 325–345 (TIGG…ASIG), and 354–374 (EIFV…PIVV).

Belongs to the monovalent cation:proton antiporter 1 (CPA1) transporter (TC 2.A.36) family.

Its subcellular location is the cell membrane. Functionally, this is probably a Na(+)/H(+) antiporter. The polypeptide is Probable Na(+)/H(+) antiporter 3 (Methanocaldococcus jannaschii (strain ATCC 43067 / DSM 2661 / JAL-1 / JCM 10045 / NBRC 100440) (Methanococcus jannaschii)).